A 534-amino-acid polypeptide reads, in one-letter code: CTP synthase (534 aa).

The tract at residues 1 to 269 is amidoligase domain; sequence MHVSNSKFIF…DKIIIDAFRL (269 aa). A CTP-binding site is contributed by Ser17. Ser17 lines the UTP pocket. Residue 18 to 23 coordinates ATP; sequence SLGKGV. Tyr58 provides a ligand contact to L-glutamine. Asp75 contributes to the ATP binding site. Positions 75 and 143 each coordinate Mg(2+). CTP-binding positions include 150-152, 190-195, and Lys226; these read DIE and KTKPTQ. UTP-binding positions include 190–195 and Lys226; that span reads KTKPTQ. The Glutamine amidotransferase type-1 domain occupies 294–532; it reads DIAIVGKYIK…IENAYIYKKE (239 aa). Gly352 contacts L-glutamine. Catalysis depends on Cys379, which acts as the Nucleophile; for glutamine hydrolysis. L-glutamine-binding positions include 380–383, Glu403, and Arg460; that span reads LGMQ. Catalysis depends on residues His505 and Glu507.

This sequence belongs to the CTP synthase family. In terms of assembly, homotetramer.

The enzyme catalyses UTP + L-glutamine + ATP + H2O = CTP + L-glutamate + ADP + phosphate + 2 H(+). It catalyses the reaction L-glutamine + H2O = L-glutamate + NH4(+). It carries out the reaction UTP + NH4(+) + ATP = CTP + ADP + phosphate + 2 H(+). It participates in pyrimidine metabolism; CTP biosynthesis via de novo pathway; CTP from UDP: step 2/2. With respect to regulation, allosterically activated by GTP, when glutamine is the substrate; GTP has no effect on the reaction when ammonia is the substrate. The allosteric effector GTP functions by stabilizing the protein conformation that binds the tetrahedral intermediate(s) formed during glutamine hydrolysis. Inhibited by the product CTP, via allosteric rather than competitive inhibition. Its function is as follows. Catalyzes the ATP-dependent amination of UTP to CTP with either L-glutamine or ammonia as the source of nitrogen. Regulates intracellular CTP levels through interactions with the four ribonucleotide triphosphates. In Hydrogenobaculum sp. (strain Y04AAS1), this protein is CTP synthase.